A 410-amino-acid chain; its full sequence is Probable peptidoglycan glycosyltransferase FtsW (410 aa).

Over 1–37 (MRSEERQLNLFGTSVNWSWPNLFKEREAPGMQLYDRA) the chain is Cytoplasmic. The helical transmembrane segment at 38-58 (LLFAVLSLICFGFVMVMSASM) threads the bilayer. At 59–69 (PEAQSLTGNPY) the chain is on the periplasmic side. The chain crosses the membrane as a helical span at residues 70–90 (HFAIRHFAYLVGCAVIAAVVL). At 91–99 (RIEMSRWQQ) the chain is on the cytoplasmic side. The helical transmembrane segment at 100 to 120 (FSPLLLLIVGIMLVAVLLVGT) threads the bilayer. The Periplasmic portion of the chain corresponds to 121–131 (SVNGATRWLSV). A helical membrane pass occupies residues 132–154 (GPIRIQVAELAKFAFTIYMAGYL). Over 155–163 (VRRHQEIRE) the chain is Cytoplasmic. A helical transmembrane segment spans residues 164–184 (NAKGFYKPIAVFAVYAFLILM). The Periplasmic segment spans residues 185 to 186 (QP). The chain crosses the membrane as a helical span at residues 187–207 (DLGTVVVLFVGTVGLLFLAGA). R208 is a topological domain (cytoplasmic). The helical transmembrane segment at 209–229 (LLDFFALILTGVMAFVALVLL) threads the bilayer. At 230–291 (EPYRMRRVTS…PEAHTDFIFA (62 aa)) the chain is on the periplasmic side. Residues 292–312 (VIGEELGFIGIVVVLSVLLFV) form a helical membrane-spanning segment. The Cytoplasmic portion of the chain corresponds to 313–336 (ALRAIKLGNLCIEIDKPFEGYLAY). The helical transmembrane segment at 337 to 357 (AIGIWFCFQTVVNVGASIGML) threads the bilayer. Topologically, residues 358–364 (PTKGLTL) are periplasmic. Residues 365 to 385 (PFISYGGSSLWVMTAAAMILI) form a helical membrane-spanning segment. Over 386–410 (RIDHERRLSSIQAVQGKKVNDNREY) the chain is Cytoplasmic.

It belongs to the SEDS family. FtsW subfamily.

Its subcellular location is the cell inner membrane. It carries out the reaction [GlcNAc-(1-&gt;4)-Mur2Ac(oyl-L-Ala-gamma-D-Glu-L-Lys-D-Ala-D-Ala)](n)-di-trans,octa-cis-undecaprenyl diphosphate + beta-D-GlcNAc-(1-&gt;4)-Mur2Ac(oyl-L-Ala-gamma-D-Glu-L-Lys-D-Ala-D-Ala)-di-trans,octa-cis-undecaprenyl diphosphate = [GlcNAc-(1-&gt;4)-Mur2Ac(oyl-L-Ala-gamma-D-Glu-L-Lys-D-Ala-D-Ala)](n+1)-di-trans,octa-cis-undecaprenyl diphosphate + di-trans,octa-cis-undecaprenyl diphosphate + H(+). Its pathway is cell wall biogenesis; peptidoglycan biosynthesis. In terms of biological role, peptidoglycan polymerase that is essential for cell division. The protein is Probable peptidoglycan glycosyltransferase FtsW of Shewanella sediminis (strain HAW-EB3).